Consider the following 84-residue polypeptide: Small ribosomal subunit protein bS16 (84 aa).

Belongs to the bacterial ribosomal protein bS16 family.

The sequence is that of Small ribosomal subunit protein bS16 from Endomicrobium trichonymphae.